The sequence spans 241 residues: Probable transcriptional regulatory protein AZOSEA20720 (241 aa).

Residues 1 to 21 are disordered; sequence MAGHSKWANIQHRKGRQDAKR.

The protein belongs to the TACO1 family.

It is found in the cytoplasm. In Aromatoleum aromaticum (strain DSM 19018 / LMG 30748 / EbN1) (Azoarcus sp. (strain EbN1)), this protein is Probable transcriptional regulatory protein AZOSEA20720.